The following is a 566-amino-acid chain: Urease subunit alpha (566 aa).

The Urease domain maps to 128–566 (GGVDTHIHFI…LPMAQRYFLF (439 aa)). Residues His133, His135, and Lys216 each contribute to the Ni(2+) site. Lys216 is subject to N6-carboxylysine. His218 lines the substrate pocket. Residues His245 and His271 each coordinate Ni(2+). The active-site Proton donor is the His319. Asp359 is a binding site for Ni(2+).

It belongs to the metallo-dependent hydrolases superfamily. Urease alpha subunit family. In terms of assembly, may form a heterohexamer of 3 UreC (alpha) and 3 UreAB (gamma/beta) subunits. May also form a heterotrimer of UreA (gamma), UreB (beta) and UreC (alpha) subunits. Three heterotrimers associate to form the active enzyme. Requires Ni cation as cofactor. Post-translationally, carboxylation allows a single lysine to coordinate two nickel ions.

It localises to the cytoplasm. It carries out the reaction urea + 2 H2O + H(+) = hydrogencarbonate + 2 NH4(+). It functions in the pathway nitrogen metabolism; urea degradation; CO(2) and NH(3) from urea (urease route): step 1/1. This is Urease subunit alpha from Pseudomonas syringae pv. tomato (strain ATCC BAA-871 / DC3000).